A 482-amino-acid chain; its full sequence is Adenylyltransferase and sulfurtransferase MOCS3-2 (482 aa).

Residues Gly-125, Asp-146, 153–157, Lys-170, and 214–215 contribute to the ATP site; these read NNLHR and DN. Zn(2+) contacts are provided by Cys-255 and Cys-258. Catalysis depends on Cys-272, which acts as the Glycyl thioester intermediate; for adenylyltransferase activity. Positions 330 and 333 each coordinate Zn(2+). Residues 385-480 enclose the Rhodanese domain; that stretch reads DGEPHLLLDV…WGQDVDPDFP (96 aa). Catalysis depends on Cys-440, which acts as the Cysteine persulfide intermediate; for sulfurtransferase activity.

The protein in the N-terminal section; belongs to the HesA/MoeB/ThiF family. UBA4 subfamily. Requires Zn(2+) as cofactor.

It is found in the cytoplasm. It catalyses the reaction [molybdopterin-synthase sulfur-carrier protein]-C-terminal Gly-Gly + ATP + H(+) = [molybdopterin-synthase sulfur-carrier protein]-C-terminal Gly-Gly-AMP + diphosphate. The enzyme catalyses [molybdopterin-synthase sulfur-carrier protein]-C-terminal Gly-Gly-AMP + S-sulfanyl-L-cysteinyl-[cysteine desulfurase] + AH2 = [molybdopterin-synthase sulfur-carrier protein]-C-terminal-Gly-aminoethanethioate + L-cysteinyl-[cysteine desulfurase] + A + AMP + 2 H(+). It functions in the pathway tRNA modification; 5-methoxycarbonylmethyl-2-thiouridine-tRNA biosynthesis. The protein operates within cofactor biosynthesis; molybdopterin biosynthesis. Its function is as follows. Plays a central role in 2-thiolation of mcm(5)S(2)U at tRNA wobble positions of cytosolic tRNA(Lys), tRNA(Glu) and tRNA(Gln). Also essential during biosynthesis of the molybdenum cofactor. Acts by mediating the C-terminal thiocarboxylation of sulfur carriers URM1 and MOCS2A. Its N-terminus first activates URM1 and MOCS2A as acyl-adenylates (-COAMP), then the persulfide sulfur on the catalytic cysteine is transferred to URM1 and MOCS2A to form thiocarboxylation (-COSH) of their C-terminus. The reaction probably involves hydrogen sulfide that is generated from the persulfide intermediate and that acts as a nucleophile towards URM1 and MOCS2A. Subsequently, a transient disulfide bond is formed. Does not use thiosulfate as sulfur donor; NFS1 probably acting as a sulfur donor for thiocarboxylation reactions. The protein is Adenylyltransferase and sulfurtransferase MOCS3-2 of Zea mays (Maize).